A 131-amino-acid polypeptide reads, in one-letter code: Neurophysin 2 (131 aa).

7 cysteine pairs are disulfide-bonded: Cys-10-Cys-55, Cys-13-Cys-27, Cys-21-Cys-45, Cys-28-Cys-35, Cys-62-Cys-74, Cys-68-Cys-86, and Cys-75-Cys-80.

This sequence belongs to the vasopressin/oxytocin family.

The protein resides in the secreted. Neurophysin 2 specifically binds vasopressin. The chain is Neurophysin 2 from Anser anser anser (Western greylag goose).